The sequence spans 232 residues: Ubiquinone biosynthesis O-methyltransferase (232 aa).

S-adenosyl-L-methionine-binding residues include Arg36, Gly55, Asp76, and Met120.

The protein belongs to the methyltransferase superfamily. UbiG/COQ3 family.

It catalyses the reaction a 3-demethylubiquinol + S-adenosyl-L-methionine = a ubiquinol + S-adenosyl-L-homocysteine + H(+). The enzyme catalyses a 3-(all-trans-polyprenyl)benzene-1,2-diol + S-adenosyl-L-methionine = a 2-methoxy-6-(all-trans-polyprenyl)phenol + S-adenosyl-L-homocysteine + H(+). It functions in the pathway cofactor biosynthesis; ubiquinone biosynthesis. In terms of biological role, O-methyltransferase that catalyzes the 2 O-methylation steps in the ubiquinone biosynthetic pathway. This is Ubiquinone biosynthesis O-methyltransferase from Burkholderia mallei (strain ATCC 23344).